The chain runs to 340 residues: MSTAVINTDDDQLEPTLQSILDQKSLRWIFVGGKGGVGKTTTSCSLAIQLAKVRRSVLLISTDPAHNLSDAFSQKFGKEARLINGFENLSAMEIDPNGSIQELMGQAEEGEGPAAGMGGMMQDLAFAIPGIDEAMSFAEVLKQVKSLSYETIIFDTAPTGHTLRFLQFPTVLEKALAKVSQLSTQFGPMLNGLLGANGSLPNGQNLGEMMEKLEGLRETISEVNGQFKDENLTTFVCVCIPEFLSLYETERMIQELSSYHIDTHCIVVNQLLFPKKGSDCDQCNARRKMQKKYLEQIEELYDEFNVVKMPLLVEEVRGKERLEKFSEMLITPYVPPAGGL.

34-41 (KGGVGKTT) contacts ATP. Residue D63 is part of the active site. ATP is bound by residues E242 and N269. Residues C280 and C283 each coordinate Zn(2+).

Belongs to the arsA ATPase family. As to quaternary structure, homodimer.

Its subcellular location is the cytoplasm. The protein localises to the endoplasmic reticulum. In terms of biological role, ATPase required for the post-translational delivery of tail-anchored (TA) proteins to the endoplasmic reticulum. Recognizes and selectively binds the transmembrane domain of TA proteins in the cytosol. This complex then targets to the endoplasmic reticulum by membrane-bound receptors, where the tail-anchored protein is released for insertion. This process is regulated by ATP binding and hydrolysis. ATP binding drives the homodimer towards the closed dimer state, facilitating recognition of newly synthesized TA membrane proteins. ATP hydrolysis is required for insertion. Subsequently, the homodimer reverts towards the open dimer state, lowering its affinity for the membrane-bound receptor, and returning it to the cytosol to initiate a new round of targeting. This chain is ATPase get3 (get3), found in Sclerotinia sclerotiorum (strain ATCC 18683 / 1980 / Ss-1) (White mold).